The primary structure comprises 383 residues: ATP phosphoribosyltransferase regulatory subunit (383 aa).

This sequence belongs to the class-II aminoacyl-tRNA synthetase family. HisZ subfamily. In terms of assembly, heteromultimer composed of HisG and HisZ subunits.

The protein resides in the cytoplasm. The protein operates within amino-acid biosynthesis; L-histidine biosynthesis; L-histidine from 5-phospho-alpha-D-ribose 1-diphosphate: step 1/9. Functionally, required for the first step of histidine biosynthesis. May allow the feedback regulation of ATP phosphoribosyltransferase activity by histidine. The sequence is that of ATP phosphoribosyltransferase regulatory subunit from Neisseria gonorrhoeae (strain NCCP11945).